The following is a 131-amino-acid chain: Phosphoribosyl-AMP cyclohydrolase (131 aa).

Aspartate 80 provides a ligand contact to Mg(2+). Cysteine 81 is a Zn(2+) binding site. The Mg(2+) site is built by aspartate 82 and aspartate 84. 2 residues coordinate Zn(2+): cysteine 98 and cysteine 105.

The protein belongs to the PRA-CH family. Homodimer. It depends on Mg(2+) as a cofactor. The cofactor is Zn(2+).

It is found in the cytoplasm. The catalysed reaction is 1-(5-phospho-beta-D-ribosyl)-5'-AMP + H2O = 1-(5-phospho-beta-D-ribosyl)-5-[(5-phospho-beta-D-ribosylamino)methylideneamino]imidazole-4-carboxamide. It functions in the pathway amino-acid biosynthesis; L-histidine biosynthesis; L-histidine from 5-phospho-alpha-D-ribose 1-diphosphate: step 3/9. Functionally, catalyzes the hydrolysis of the adenine ring of phosphoribosyl-AMP. The polypeptide is Phosphoribosyl-AMP cyclohydrolase (Azoarcus sp. (strain BH72)).